We begin with the raw amino-acid sequence, 254 residues long: HTH-type transcriptional regulator GolR (254 aa).

One can recognise an HTH deoR-type domain in the interval 3–58; the sequence is PFERQNKIIHLLDQNNKITVPELSRILDVSISTIRNDLSALEESGMIKKVHGGAVL. The segment at residues 20–39 is a DNA-binding region (H-T-H motif); sequence ITVPELSRILDVSISTIRND.

In terms of biological role, involved in the glycerol metabolism. Repressor of the gol operon for glycerol metabolism. In Listeria innocua serovar 6a (strain ATCC BAA-680 / CLIP 11262), this protein is HTH-type transcriptional regulator GolR.